We begin with the raw amino-acid sequence, 247 residues long: Small ribosomal subunit protein uS2 (247 aa).

Belongs to the universal ribosomal protein uS2 family.

The chain is Small ribosomal subunit protein uS2 from Ectopseudomonas mendocina (strain ymp) (Pseudomonas mendocina).